A 189-amino-acid chain; its full sequence is NADH-quinone oxidoreductase subunit B (189 aa).

Positions 39, 40, 104, and 135 each coordinate [4Fe-4S] cluster.

Belongs to the complex I 20 kDa subunit family. NDH-1 is composed of 14 different subunits. Subunits NuoB, C, D, E, F, and G constitute the peripheral sector of the complex. The cofactor is [4Fe-4S] cluster.

The protein localises to the cell inner membrane. The catalysed reaction is a quinone + NADH + 5 H(+)(in) = a quinol + NAD(+) + 4 H(+)(out). In terms of biological role, NDH-1 shuttles electrons from NADH, via FMN and iron-sulfur (Fe-S) centers, to quinones in the respiratory chain. The immediate electron acceptor for the enzyme in this species is believed to be a menaquinone. Couples the redox reaction to proton translocation (for every two electrons transferred, four hydrogen ions are translocated across the cytoplasmic membrane), and thus conserves the redox energy in a proton gradient. This chain is NADH-quinone oxidoreductase subunit B, found in Chlorobaculum parvum (strain DSM 263 / NCIMB 8327) (Chlorobium vibrioforme subsp. thiosulfatophilum).